The chain runs to 314 residues: tRNA pseudouridine synthase B (314 aa).

The active-site Nucleophile is the D47.

It belongs to the pseudouridine synthase TruB family. Type 1 subfamily.

It carries out the reaction uridine(55) in tRNA = pseudouridine(55) in tRNA. Functionally, responsible for synthesis of pseudouridine from uracil-55 in the psi GC loop of transfer RNAs. In Vibrio campbellii (strain ATCC BAA-1116), this protein is tRNA pseudouridine synthase B.